The chain runs to 86 residues: MELSAEYLREKLQRDLEAEHVEVEDTTLNRCSCSFRVLVVSAKFEGKPLLQRHRLVNACLAEELPHIHAFEQKTLTPDQWARERQK.

M1 bears the N-acetylmethionine mark.

The protein belongs to the BolA/IbaG family. As to quaternary structure, interacts with GLRX3; forms a heterotrimeric complex composed by two BOLA2 molecules and one GLRX3 molecule; linked by [2Fe-2S] clusters.

Its subcellular location is the cytoplasm. It localises to the nucleus. Acts as a cytosolic iron-sulfur (Fe-S) cluster assembly factor that facilitates [2Fe-2S] cluster insertion into a subset of cytosolic proteins. Acts together with the monothiol glutaredoxin GLRX3. In Homo sapiens (Human), this protein is BolA-like protein 2 (BOLA2).